Consider the following 189-residue polypeptide: MSKLFYAFAVLAVHVLTSSPTTAASNLPVNLVTGPAFTTPAGAAHRRFLRSIHEGEDSLKPSAFSEERTALRAMDYLLKPKHKKLAAALKKSTSKHKLSVAPEKMKSIQVLGDPKNPEREWFKRLYNSKRGDPQTLRKLGQFKTEAQLSRYIKFYVVCRTCIACYSSGRSDSCHRTPRMVRTVGVGCRD.

The signal sequence occupies residues 1 to 23 (MSKLFYAFAVLAVHVLTSSPTTA). Positions 47-68 (RFLRSIHEGEDSLKPSAFSEER) match the RxLR-dEER motif.

It belongs to the RxLR effector family.

The protein localises to the secreted. It localises to the host cytoplasm. It is found in the host nucleus. Effector that is involved in host plant infection. Contributes to virulence during the early infection stage, by inhibiting plant defense responses induced by both PAMP-triggered immunity (PTI) and effector-triggered immunity (ETI). This is RxLR effector protein CRE18 from Phytophthora infestans (strain T30-4) (Potato late blight agent).